A 701-amino-acid chain; its full sequence is Probable cytosolic oligopeptidase A (701 aa).

N-acetylalanine is present on Ala2. The stretch at 148 to 194 (IALEDDKREEFNKIEQELEKLSHKFSENVLDATKKFEKLITDKKEIE) forms a coiled coil. His483 lines the Zn(2+) pocket. The active site involves Glu484. Residues His487 and Glu513 each coordinate Zn(2+). Substrate is bound at residue 615–621 (HIFAGGY).

Belongs to the peptidase M3 family. Requires Zn(2+) as cofactor.

Its subcellular location is the cytoplasm. It is found in the cytosol. It catalyses the reaction Hydrolysis of oligopeptides, with broad specificity. Gly or Ala commonly occur as P1 or P1' residues, but more distant residues are also important, as is shown by the fact that Z-Gly-Pro-Gly-|-Gly-Pro-Ala is cleaved, but not Z-(Gly)(5).. Its activity is regulated as follows. Inhibited by salicylic acid. Its function is as follows. Oligopeptidase that may be involved in the degradation of proteasome-generated peptides. Binds salicylic acid. The protein is Probable cytosolic oligopeptidase A of Arabidopsis thaliana (Mouse-ear cress).